Here is a 599-residue protein sequence, read N- to C-terminus: Dehydrogenase eriK (599 aa).

Residues 1–20 form the signal peptide; it reads MAFLKARLAALLSVAVSCSA. Residues 43–44 and 64–65 each bind FAD; these read TA and EG. The N-linked (GlcNAc...) asparagine glycan is linked to asparagine 93. Residue 122 to 125 coordinates FAD; it reads NGMY. Asparagine 169, asparagine 191, asparagine 234, asparagine 260, asparagine 284, asparagine 319, asparagine 339, asparagine 353, asparagine 365, asparagine 370, asparagine 398, asparagine 456, and asparagine 518 each carry an N-linked (GlcNAc...) asparagine glycan. FAD is bound by residues alanine 569 and 580–581; that span reads TQ.

The protein belongs to the GMC oxidoreductase family. As to quaternary structure, homodimer. Requires FAD as cofactor.

In terms of biological role, dehydrogenase; part of the gene cluster that mediates the biosynthesis of erinacines, cyathane-xylosides that show unique biological activities, including leishmanicidal activity, stimulating activity for nerve growth-factor synthesis, and agonistic activity toward the kappa opioid receptor. The role of the dehydrogenase eriK within the pathway has still to be determined. The first step of the erinacines biosynthesis pathway is catalyzed by the geranylgeranyl diphosphate (GGPP) synthase eriE via conversion of farnesyl pyrophosphate and isopentyl pyrophosphate into geranylgeranyl pyrophosphate (GGPP). GGPP is then substrate of the diterpene cyclase eriG for the production of cyatha-3,12-diene. The cytochrome P450 monooxygenase eriI then hydroxylates cyatha-3,12-diene at C-14 of the seven-membered ring to produce erinacol, which is further hydroxylated at C-15 by the cytochrome P450 monooxygenase eriC to yield cyathadiol. The cytochrome P450 monooxygenase eriA then catalyzes C-11 hydroxylation in the presence of the short chain dehydrogenase/reductase (SDR) eriH, which leads to the production of cyathatriol. The acetyltransferase eriL converts cyathatriol into 11-O-acetyl-cyathatriol. The SDR eriH catalyzes further oxidation of 11-O-acetyl-cyathatriol into 1-O-acetylcyathin A3. Finally, the glycosyl transferase eriJ tranfers xylose from UDP-xylose onto C-14 of 11-O-acetyl-cyathatriol to form eracine Q. EriJ is also able to convert 11-O-acetyl-cyathatriol to eracine Q2 by using UDP-D-glucose as cosubstrate, but at a lower rate. In Hericium erinaceus (Lion's mane mushroom), this protein is Dehydrogenase eriK.